Here is a 1360-residue protein sequence, read N- to C-terminus: DNA-directed RNA polymerase subunit beta (1360 aa).

The protein belongs to the RNA polymerase beta chain family. As to quaternary structure, the RNAP catalytic core consists of 2 alpha, 1 beta, 1 beta' and 1 omega subunit. When a sigma factor is associated with the core the holoenzyme is formed, which can initiate transcription.

The enzyme catalyses RNA(n) + a ribonucleoside 5'-triphosphate = RNA(n+1) + diphosphate. In terms of biological role, DNA-dependent RNA polymerase catalyzes the transcription of DNA into RNA using the four ribonucleoside triphosphates as substrates. In Teredinibacter turnerae (strain ATCC 39867 / T7901), this protein is DNA-directed RNA polymerase subunit beta.